Here is a 323-residue protein sequence, read N- to C-terminus: tRNA dimethylallyltransferase (323 aa).

Residue 12–19 (GPTAAGKT) participates in ATP binding. Residue 14–19 (TAAGKT) coordinates substrate. 2 interaction with substrate tRNA regions span residues 37 to 40 (DSAL) and 161 to 165 (QRLSR).

Belongs to the IPP transferase family. As to quaternary structure, monomer. Mg(2+) is required as a cofactor.

The enzyme catalyses adenosine(37) in tRNA + dimethylallyl diphosphate = N(6)-dimethylallyladenosine(37) in tRNA + diphosphate. Functionally, catalyzes the transfer of a dimethylallyl group onto the adenine at position 37 in tRNAs that read codons beginning with uridine, leading to the formation of N6-(dimethylallyl)adenosine (i(6)A). The sequence is that of tRNA dimethylallyltransferase from Pseudomonas fluorescens (strain Pf0-1).